Here is a 343-residue protein sequence, read N- to C-terminus: Heat-inducible transcription repressor HrcA (343 aa).

This sequence belongs to the HrcA family.

Its function is as follows. Negative regulator of class I heat shock genes (grpE-dnaK-dnaJ and groELS operons). Prevents heat-shock induction of these operons. This Bacillus licheniformis (strain ATCC 14580 / DSM 13 / JCM 2505 / CCUG 7422 / NBRC 12200 / NCIMB 9375 / NCTC 10341 / NRRL NRS-1264 / Gibson 46) protein is Heat-inducible transcription repressor HrcA.